The following is a 418-amino-acid chain: Actin-related protein 3 (418 aa).

The protein belongs to the actin family. ARP3 subfamily. As to quaternary structure, component of the Arp2/3 complex.

The protein resides in the cytoplasm. It is found in the cytoskeleton. Its function is as follows. Functions as ATP-binding component of the Arp2/3 complex which is involved in regulation of actin polymerization and together with an activating nucleation-promoting factor (NPF) mediates the formation of branched actin networks. Seems to contact the pointed end of the daughter actin filament. Required during embryogenesis for the developmental migration of tail hemocytes anteriorly, along the ventral midline. This is Actin-related protein 3 from Drosophila melanogaster (Fruit fly).